Reading from the N-terminus, the 420-residue chain is Serine hydroxymethyltransferase (420 aa).

Residues L121 and 125–127 contribute to the (6S)-5,6,7,8-tetrahydrofolate site; that span reads GHL. An N6-(pyridoxal phosphate)lysine modification is found at K229.

The protein belongs to the SHMT family. In terms of assembly, homodimer. Pyridoxal 5'-phosphate serves as cofactor.

It localises to the cytoplasm. It catalyses the reaction (6R)-5,10-methylene-5,6,7,8-tetrahydrofolate + glycine + H2O = (6S)-5,6,7,8-tetrahydrofolate + L-serine. Its pathway is one-carbon metabolism; tetrahydrofolate interconversion. It functions in the pathway amino-acid biosynthesis; glycine biosynthesis; glycine from L-serine: step 1/1. Its function is as follows. Catalyzes the reversible interconversion of serine and glycine with tetrahydrofolate (THF) serving as the one-carbon carrier. This reaction serves as the major source of one-carbon groups required for the biosynthesis of purines, thymidylate, methionine, and other important biomolecules. Also exhibits THF-independent aldolase activity toward beta-hydroxyamino acids, producing glycine and aldehydes, via a retro-aldol mechanism. The sequence is that of Serine hydroxymethyltransferase from Wigglesworthia glossinidia brevipalpis.